The chain runs to 80 residues: Exodeoxyribonuclease 7 small subunit (80 aa).

The protein belongs to the XseB family. In terms of assembly, heterooligomer composed of large and small subunits.

The protein localises to the cytoplasm. It carries out the reaction Exonucleolytic cleavage in either 5'- to 3'- or 3'- to 5'-direction to yield nucleoside 5'-phosphates.. Bidirectionally degrades single-stranded DNA into large acid-insoluble oligonucleotides, which are then degraded further into small acid-soluble oligonucleotides. This Vibrio vulnificus (strain CMCP6) protein is Exodeoxyribonuclease 7 small subunit.